A 1199-amino-acid chain; its full sequence is DNA-directed RNA polymerase subunit beta (1199 aa).

The tract at residues 1175 to 1199 (EEKKAHEAAAQATDGKSANSTDDKK) is disordered. Residues 1188 to 1199 (DGKSANSTDDKK) are compositionally biased toward polar residues.

It belongs to the RNA polymerase beta chain family. As to quaternary structure, the RNAP catalytic core consists of 2 alpha, 1 beta, 1 beta' and 1 omega subunit. When a sigma factor is associated with the core the holoenzyme is formed, which can initiate transcription.

It carries out the reaction RNA(n) + a ribonucleoside 5'-triphosphate = RNA(n+1) + diphosphate. Functionally, DNA-dependent RNA polymerase catalyzes the transcription of DNA into RNA using the four ribonucleoside triphosphates as substrates. The sequence is that of DNA-directed RNA polymerase subunit beta from Lacticaseibacillus casei (strain BL23) (Lactobacillus casei).